Reading from the N-terminus, the 231-residue chain is NADH-ubiquinone oxidoreductase chain 4 (231 aa).

The next 6 helical transmembrane spans lie at 1–21, 34–54, 61–80, 84–106, 118–138, and 156–178; these read PIAGSMVLAAILLKLGGYGII, LFIPFITLALWGATLANLTCL, SLIAYSSISHMGLVVAAITI, WGLSGAMALMIAHGFTSSALFCL, VLILTRGLHNILPMATTWWLL, and LLIMSSLFNWCPTTIILLGLSML.

The protein belongs to the complex I subunit 4 family.

Its subcellular location is the mitochondrion membrane. It carries out the reaction a ubiquinone + NADH + 5 H(+)(in) = a ubiquinol + NAD(+) + 4 H(+)(out). Its function is as follows. Core subunit of the mitochondrial membrane respiratory chain NADH dehydrogenase (Complex I) that is believed to belong to the minimal assembly required for catalysis. Complex I functions in the transfer of electrons from NADH to the respiratory chain. The immediate electron acceptor for the enzyme is believed to be ubiquinone. The chain is NADH-ubiquinone oxidoreductase chain 4 (MT-ND4) from Azemiops feae (Fea's viper).